A 119-amino-acid chain; its full sequence is Putative F-box protein At2g39415 (119 aa).

Positions 37 to 92 (IDSISSLPDVILQQILSSLPTNLAIRTSVLSTRWRHVWSDTPYIYFDGPGTLYRGL) constitute an F-box domain.

The chain is Putative F-box protein At2g39415 from Arabidopsis thaliana (Mouse-ear cress).